A 210-amino-acid chain; its full sequence is Thymidylate kinase (210 aa).

9–16 (GPEGAGKT) is an ATP binding site.

Belongs to the thymidylate kinase family.

The catalysed reaction is dTMP + ATP = dTDP + ADP. Phosphorylation of dTMP to form dTDP in both de novo and salvage pathways of dTTP synthesis. The sequence is that of Thymidylate kinase from Thermomicrobium roseum (strain ATCC 27502 / DSM 5159 / P-2).